Consider the following 354-residue polypeptide: Peptide chain release factor 1 (354 aa).

Gln-230 bears the N5-methylglutamine mark.

This sequence belongs to the prokaryotic/mitochondrial release factor family. In terms of processing, methylated by PrmC. Methylation increases the termination efficiency of RF1.

The protein resides in the cytoplasm. In terms of biological role, peptide chain release factor 1 directs the termination of translation in response to the peptide chain termination codons UAG and UAA. The polypeptide is Peptide chain release factor 1 (Pelobacter propionicus (strain DSM 2379 / NBRC 103807 / OttBd1)).